The primary structure comprises 81 residues: Cytochrome b559 subunit alpha (81 aa).

Residues 21–35 traverse the membrane as a helical segment; that stretch reads VIHSITIPMLFIAGW. Residue H23 coordinates heme.

Belongs to the PsbE/PsbF family. In terms of assembly, heterodimer of an alpha subunit and a beta subunit. PSII is composed of 1 copy each of membrane proteins PsbA, PsbB, PsbC, PsbD, PsbE, PsbF, PsbH, PsbI, PsbJ, PsbK, PsbL, PsbM, PsbT, PsbX, PsbY, PsbZ, Psb30/Ycf12, peripheral proteins PsbO, CyanoQ (PsbQ), PsbU, PsbV and a large number of cofactors. It forms dimeric complexes. It depends on heme b as a cofactor.

It localises to the cellular thylakoid membrane. In terms of biological role, this b-type cytochrome is tightly associated with the reaction center of photosystem II (PSII). PSII is a light-driven water:plastoquinone oxidoreductase that uses light energy to abstract electrons from H(2)O, generating O(2) and a proton gradient subsequently used for ATP formation. It consists of a core antenna complex that captures photons, and an electron transfer chain that converts photonic excitation into a charge separation. The polypeptide is Cytochrome b559 subunit alpha (Crocosphaera subtropica (strain ATCC 51142 / BH68) (Cyanothece sp. (strain ATCC 51142))).